The chain runs to 276 residues: Probable endonuclease 4 (276 aa).

Positions 70, 108, 143, 176, 179, 210, 223, 225, and 255 each coordinate Zn(2+).

It belongs to the AP endonuclease 2 family. Zn(2+) is required as a cofactor.

The enzyme catalyses Endonucleolytic cleavage to 5'-phosphooligonucleotide end-products.. Its function is as follows. Endonuclease IV plays a role in DNA repair. It cleaves phosphodiester bonds at apurinic or apyrimidinic (AP) sites, generating a 3'-hydroxyl group and a 5'-terminal sugar phosphate. This is Probable endonuclease 4 from Mesomycoplasma hyopneumoniae (strain 7448) (Mycoplasma hyopneumoniae).